Reading from the N-terminus, the 432-residue chain is Trigger factor (432 aa).

The region spanning 161–246 (EDRVTIDFTG…LKKVEERELP (86 aa)) is the PPIase FKBP-type domain.

Belongs to the FKBP-type PPIase family. Tig subfamily.

Its subcellular location is the cytoplasm. The enzyme catalyses [protein]-peptidylproline (omega=180) = [protein]-peptidylproline (omega=0). Its function is as follows. Involved in protein export. Acts as a chaperone by maintaining the newly synthesized protein in an open conformation. Functions as a peptidyl-prolyl cis-trans isomerase. The polypeptide is Trigger factor (Klebsiella pneumoniae (strain 342)).